The following is a 427-amino-acid chain: tRNA(Ile)-lysidine synthase (427 aa).

An ATP-binding site is contributed by Ser-27–Ser-32.

It belongs to the tRNA(Ile)-lysidine synthase family.

The protein localises to the cytoplasm. It catalyses the reaction cytidine(34) in tRNA(Ile2) + L-lysine + ATP = lysidine(34) in tRNA(Ile2) + AMP + diphosphate + H(+). Ligates lysine onto the cytidine present at position 34 of the AUA codon-specific tRNA(Ile) that contains the anticodon CAU, in an ATP-dependent manner. Cytidine is converted to lysidine, thus changing the amino acid specificity of the tRNA from methionine to isoleucine. The chain is tRNA(Ile)-lysidine synthase from Streptococcus equi subsp. equi (strain 4047).